Here is a 292-residue protein sequence, read N- to C-terminus: Acetyl-coenzyme A carboxylase carboxyl transferase subunit beta (292 aa).

Positions 36-292 (MWSKCEKCAK…LLRMHEVDYE (257 aa)) constitute a CoA carboxyltransferase N-terminal domain. Positions 40, 43, 59, and 62 each coordinate Zn(2+). The C4-type zinc-finger motif lies at 40-62 (CEKCAKILYTEDLRENFNVCPNC).

Belongs to the AccD/PCCB family. In terms of assembly, acetyl-CoA carboxylase is a heterohexamer composed of biotin carboxyl carrier protein (AccB), biotin carboxylase (AccC) and two subunits each of ACCase subunit alpha (AccA) and ACCase subunit beta (AccD). Requires Zn(2+) as cofactor.

It localises to the cytoplasm. The catalysed reaction is N(6)-carboxybiotinyl-L-lysyl-[protein] + acetyl-CoA = N(6)-biotinyl-L-lysyl-[protein] + malonyl-CoA. Its pathway is lipid metabolism; malonyl-CoA biosynthesis; malonyl-CoA from acetyl-CoA: step 1/1. In terms of biological role, component of the acetyl coenzyme A carboxylase (ACC) complex. Biotin carboxylase (BC) catalyzes the carboxylation of biotin on its carrier protein (BCCP) and then the CO(2) group is transferred by the transcarboxylase to acetyl-CoA to form malonyl-CoA. This is Acetyl-coenzyme A carboxylase carboxyl transferase subunit beta from Clostridium perfringens (strain ATCC 13124 / DSM 756 / JCM 1290 / NCIMB 6125 / NCTC 8237 / Type A).